The sequence spans 161 residues: Phosphopantetheine adenylyltransferase (161 aa).

Threonine 10 contacts substrate. ATP contacts are provided by residues threonine 10 to phenylalanine 11 and histidine 18. Substrate-binding residues include lysine 42, methionine 74, and arginine 88. ATP-binding positions include glycine 89–arginine 91, glutamate 99, and tryptophan 124–serine 130.

The protein belongs to the bacterial CoaD family. In terms of assembly, homohexamer. Mg(2+) serves as cofactor.

It localises to the cytoplasm. It carries out the reaction (R)-4'-phosphopantetheine + ATP + H(+) = 3'-dephospho-CoA + diphosphate. It participates in cofactor biosynthesis; coenzyme A biosynthesis; CoA from (R)-pantothenate: step 4/5. Reversibly transfers an adenylyl group from ATP to 4'-phosphopantetheine, yielding dephospho-CoA (dPCoA) and pyrophosphate. This chain is Phosphopantetheine adenylyltransferase, found in Serratia marcescens.